The chain runs to 307 residues: Nodulation protein NoeC (307 aa).

Transmembrane regions (helical) follow at residues 46–66, 91–111, 117–137, 140–160, 163–183, 212–232, 238–258, and 279–299; these read APLW…YVLN, SGLT…VCAI, LFAI…KVRG, VLDL…GATA, IPVP…LASI, IVAL…ELFV, AQGP…AYWI, and VTDG…VFLM.

It is found in the cell membrane. This chain is Nodulation protein NoeC (noeC), found in Azorhizobium caulinodans (strain ATCC 43989 / DSM 5975 / JCM 20966 / LMG 6465 / NBRC 14845 / NCIMB 13405 / ORS 571).